The following is a 682-amino-acid chain: Inactive protein-arginine deiminase type-6 (682 aa).

Phosphoserine occurs at positions 2 and 434.

Belongs to the protein arginine deiminase family. As to quaternary structure, homodimers. Associates with alpha-tubulin. In terms of processing, phosphorylation at Ser-2, possibly by RSK-type kinases, and Ser-434 creates binding sites for 14-3-3 proteins. In terms of tissue distribution, expressed at very high levels in oocytes. Weakly expressed in testis. Expressed in primordial, primary, secondary and Graafian follicles, and in immature oocytes, mature eggs and blastocyst (at protein level).

It localises to the cytoplasm. The protein localises to the nucleus. The protein resides in the cytoplasmic vesicle. Its subcellular location is the secretory vesicle. It is found in the cortical granule. Structural constituent of cytoplasmic lattices, which plays a key role in early embryonic development. Cytoplasmic lattices consist in fibrous structures found in the cytoplasm of oocytes and preimplantation embryos. They are required to store maternal proteins critical for embryonic development, such as ribosomal proteins and proteins that control epigenetic reprogramming of the preimplantation embryo, and prevent their degradation or activation. In contrast to other members of the family, does not show protein-arginine deiminase activity due to its inability to bind Ca(2+). The polypeptide is Inactive protein-arginine deiminase type-6 (Mus musculus (Mouse)).